The primary structure comprises 766 residues: Darlin (766 aa).

4 ARM repeats span residues 82–119 (QLFEFLLPNGVETLNTDTTVEQSELFSMVCRLLGNLTY), 167–208 (DFIQ…NLVD), 423–464 (EPNC…NLTL), and 465–537 (PTIN…ASMD). Residues 561–585 (EEKEKTIEKTDEKTDEKTNEKKQSK) are disordered. The ARM 5 repeat unit spans residues 610–649 (HQEKMKQLIEESVEPFFSLLQSPFPILQVEGAKGLVLLIK).

The protein belongs to the RAP1GDS1 family. Binds to small GTPases racE, racC but not rab21. Binds preferentially to GDP-bound racE.

Its function is as follows. Part of a signaling pathway that initiates the aggregation and leads to the formation of aggregation centers or streams. Not essential for cytokinesis, pinocytosis or phagocytosis. Not essential for development, except in starvation-induced aggregation. This is Darlin (darA) from Dictyostelium discoideum (Social amoeba).